Reading from the N-terminus, the 72-residue chain is PI-stichotoxin-Hmg3d (72 aa).

An N-terminal signal peptide occupies residues Gly1–Arg14. One can recognise a BPTI/Kunitz inhibitor domain in the interval Cys20–Cys70. 3 disulfide bridges follow: Cys20–Cys70, Cys29–Cys53, and Cys45–Cys66.

The protein belongs to the venom Kunitz-type family. Sea anemone type 2 potassium channel toxin subfamily.

It localises to the secreted. The protein resides in the nematocyst. Serine protease inhibitor that inhibits trypsin (Ki=50 nM). This protease exhibits a pronounced neuroprotective activity on Alzheimer's disease model. It enhances cell viability by 39.4% when neuroblastoma cells are in presence of the toxin component beta-amyloid, but has no effect when these cells are in presence of 6-OHDA. It induces an effective decrease of reactive oxygen species (ROS) level in the cells treated with oxidative stress inducers. It also protects these cells by inhibiting ATP-induced purinoceptor activation. Its binding affinity to P2RX7 is moderate (Kd=43.3 uM). The polypeptide is PI-stichotoxin-Hmg3d (Heteractis magnifica (Magnificent sea anemone)).